A 454-amino-acid chain; its full sequence is SH2 domain-containing protein 4A (454 aa).

4 disordered regions span residues 45 to 65, 107 to 131, 152 to 177, and 237 to 302; these read AMER…NGKS, EQEA…KSQY, KEEL…SSSS, and RKSK…AYPQ. Over residues 107–120 the composition is skewed to basic and acidic residues; it reads EQEAEEPRKTHSEE. A phosphoserine mark is found at Ser118 and Ser124. Residues 240 to 259 show a composition bias toward basic and acidic residues; that stretch reads KAADEKRRSLAKQAREDYKR. A phosphoserine mark is found at Ser261 and Ser315. The 94-residue stretch at 347 to 440 folds into the SH2 domain; sequence WFHGILTLKK…LGKELLLYPC (94 aa).

Interacts with ESR1. Ubiquitously expressed. Aberrantly expressed in some cancers.

It is found in the cytoplasm. Its function is as follows. Inhibits estrogen-induced cell proliferation by competing with PLCG for binding to ESR1, blocking the effect of estrogen on PLCG and repressing estrogen-induced proliferation. May play a role in T-cell development and function. The protein is SH2 domain-containing protein 4A (SH2D4A) of Homo sapiens (Human).